A 128-amino-acid chain; its full sequence is Large ribosomal subunit protein eL8 (128 aa).

The protein belongs to the eukaryotic ribosomal protein eL8 family. In terms of assembly, part of the 50S ribosomal subunit. Probably part of the RNase P complex.

It is found in the cytoplasm. Functionally, multifunctional RNA-binding protein that recognizes the K-turn motif in ribosomal RNA, the RNA component of RNase P, box H/ACA, box C/D and box C'/D' sRNAs. The protein is Large ribosomal subunit protein eL8 of Ignicoccus hospitalis (strain KIN4/I / DSM 18386 / JCM 14125).